A 651-amino-acid polypeptide reads, in one-letter code: Far upstream element-binding protein 1 (651 aa).

Disordered regions lie at residues 1-24 (MADYSTVPPPSSGSAGGGGGGVVN) and 40-92 (KIGG…HQQQ). Ala-2 is subject to N-acetylalanine. A phosphoserine mark is found at Ser-48 and Ser-51. A compositionally biased stretch (basic and acidic residues) spans 61-73 (RPLEDGDQPDAKK). 3 consecutive KH domains span residues 96–160 (VMTE…KRLL), 181–247 (NAVQ…KEMV), and 271–335 (NEGI…AEII). Ser-136 bears the Phosphoserine mark. A Phosphothreonine modification is found at Thr-149. 4 positions are modified to omega-N-methylarginine: Arg-317, Arg-355, Arg-357, and Arg-359. A KH 4 domain is found at 372–439 (LQEFNFIVPT…QQIDYARQLI (68 aa)). Ser-411 carries the phosphoserine modification. Thr-428 carries the phosphothreonine modification. Disordered regions lie at residues 443–528 (IGGP…GADP), 545–574 (AQPPPAAPAGAPATTQTNGQGDQQAPAPAG), and 625–651 (TSPQGMPQHPPAPQGFANHARSHHHLY). Pro residues predominate over residues 464-501 (PHGPPGPPGPGTPMGPYNPAPYNPGPPGPAPHGPPAPY). Low complexity-rich tracts occupy residues 514-528 (QQQAPPDPAKAGADP) and 552-574 (PAGAPATTQTNGQGDQQAPAPAG). At Ser-626 the chain carries Phosphoserine.

In terms of assembly, found in a complex with PUF60 and far upstream element (FUSE) DNA segment. Interacts with PUF60 and JTV1. Ubiquitinated. This targets the protein for proteasome-mediated degradation.

It localises to the nucleus. In terms of biological role, regulates MYC expression by binding to a single-stranded far-upstream element (FUSE) upstream of the MYC promoter. May act both as activator and repressor of transcription. This is Far upstream element-binding protein 1 (Fubp1) from Mus musculus (Mouse).